A 1035-amino-acid polypeptide reads, in one-letter code: Condensin complex subunit 3 (1035 aa).

HEAT repeat units follow at residues 113–150 (RFVDQFIRHVLRGVESPDKNVRFRVLQLLAVIMDNIGE) and 153–191 (ESLFNLLILSLNKRIYDREPTVRIQAVFCLTKFQDEEQT). S198 carries the phosphoserine modification. The HEAT 3 repeat unit spans residues 201–239 (EENFEATRTLVASIQNDPSAEVRRAAMLNLINDNNTRPY). Residues 500–536 (EEKIKSKKINRRNETSVDEEDENGTHNDEVNEDEEDD) are disordered. HEAT repeat units follow at residues 597–635 (ILIASLMDTLITPAVRNTAPNIRELGVKNLGLCCLLDVK) and 827–864 (VQLTFLIDVLKIYAQIEKKEIKKMIITNINAIFLSSEQ). A compositionally biased stretch (basic and acidic residues) spans 909–919 (ERSETQTKDEN). 2 disordered regions span residues 909–934 (ERSETQTKDENNTANDQYSSILGNSF) and 959–995 (TTVNISAVDNTTEQSNSRKRTRSEAEQIDTSKNLENM). Composition is skewed to polar residues over residues 920 to 934 (NTANDQYSSILGNSF) and 959 to 973 (TTVNISAVDNTTEQS). At S933 the chain carries Phosphoserine. Position 981 is a phosphoserine (S981). Over residues 986–995 (IDTSKNLENM) the composition is skewed to polar residues. S1008 carries the phosphoserine modification. The interval 1012 to 1035 (PDEKSDAMSIDEEDKDSESFSEVC) is disordered.

This sequence belongs to the CND3 (condensin subunit 3) family. Component of the condensin complex, which contains the SMC2 and SMC4 heterodimer, and three non SMC subunits that probably regulate the complex: BRN1, YCS4 and YCG1/YCS5.

It is found in the nucleus. The protein resides in the cytoplasm. The protein localises to the chromosome. Regulatory subunit of the condensin complex, a complex required for conversion of interphase chromatin into mitotic-like condense chromosomes. The condensin complex probably introduces positive supercoils into relaxed DNA in the presence of type I topoisomerases and converts nicked DNA into positive knotted forms in the presence of type II topoisomerases. The condensin complex probably also plays a role during interphase. This chain is Condensin complex subunit 3 (YCG1), found in Saccharomyces cerevisiae (strain ATCC 204508 / S288c) (Baker's yeast).